The sequence spans 706 residues: Axin-related protein (706 aa).

In terms of domain architecture, RGS spans 72–191 (SLNLLLDDQD…LQSDICKEYA (120 aa)). Disordered regions lie at residues 278–298 (MTDG…REIH), 400–482 (TPAN…GTSA), and 585–605 (STTL…GFST). Residues 402 to 412 (ANLSPRSQSPF) are compositionally biased toward polar residues. Low complexity predominate over residues 453-462 (RSSVSSQLPR). Residues 624 to 706 (GQGLAIVYYF…KIICKVERAC (83 aa)) enclose the DIX domain.

Interacts with dvl2/dsh via DIX domains in both proteins. Forms a complex with ctnnb1/beta-catenin and gsk3b. Also forms heterodimers with mouse Axin1.

It is found in the cytoplasm. It localises to the cytoplasmic vesicle. Functionally, regulates the wnt signaling pathway by interacting with dvl2/dsh, which displaces gsk3b from the axnr-gsk3b complex and thus prevents degradation of ctnnb1/beta-catenin. In Xenopus laevis (African clawed frog), this protein is Axin-related protein.